The primary structure comprises 568 residues: Periplasmic pectate lyase (568 aa).

Positions 1-19 are cleaved as a signal peptide; the sequence is MKRFALSLLAGLVALQASA.

The protein belongs to the polysaccharide lyase 2 family.

The protein resides in the periplasm. It catalyses the reaction Eliminative cleavage of (1-&gt;4)-alpha-D-galacturonan to give oligosaccharides with 4-deoxy-alpha-D-galact-4-enuronosyl groups at their non-reducing ends.. It participates in glycan metabolism; pectin degradation; 2-dehydro-3-deoxy-D-gluconate from pectin: step 2/5. This chain is Periplasmic pectate lyase (pelB), found in Pectobacterium carotovorum subsp. carotovorum (Erwinia carotovora subsp. carotovora).